We begin with the raw amino-acid sequence, 429 residues long: Asparagine--tRNA ligase (429 aa).

It belongs to the class-II aminoacyl-tRNA synthetase family. In terms of assembly, homodimer.

It is found in the cytoplasm. The enzyme catalyses tRNA(Asn) + L-asparagine + ATP = L-asparaginyl-tRNA(Asn) + AMP + diphosphate + H(+). The chain is Asparagine--tRNA ligase from Desulforamulus reducens (strain ATCC BAA-1160 / DSM 100696 / MI-1) (Desulfotomaculum reducens).